Reading from the N-terminus, the 173-residue chain is HTH-type transcriptional regulator IscR (173 aa).

The 130-residue stretch at 2 to 131 (KLTSKGRYAV…NDITLGELMK (130 aa)) folds into the HTH rrf2-type domain. The segment at residues 28-51 (LADISERQGISLSYLEQLFSKLRK) is a DNA-binding region (H-T-H motif). Residues C92, C98, and C104 each coordinate [2Fe-2S] cluster.

[2Fe-2S] cluster serves as cofactor.

In terms of biological role, regulates the transcription of several operons and genes involved in the biogenesis of Fe-S clusters and Fe-S-containing proteins. This is HTH-type transcriptional regulator IscR from Vibrio atlanticus (strain LGP32) (Vibrio splendidus (strain Mel32)).